Consider the following 200-residue polypeptide: ATP synthase subunit s, mitochondrial (200 aa).

The transit peptide at 1–25 directs the protein to the mitochondrion; sequence MMPFGKISQQLCGVKKLPWSCDSRY. The tract at residues 1 to 61 is N-terminal domain; the sequence is MMPFGKISQQ…SEWLLRCGAM (61 aa). Mg(2+) is bound at residue G59. LRR repeat units follow at residues 62 to 87, 88 to 116, 117 to 141, and 142 to 173; these read VRYHGQERWQKDYNHLPTGPLDKYKI, QAIDATDSCIMSIGFDHMEGLEHVEKIRL, CKCHYIEDDCLLRLSQLENLQKTIL, and EMEIISCGNITDKGIIALRHLRNLKYLLLSDL. T93 lines the Mg(2+) pocket.

The protein belongs to the ATP synthase subunit s family. In terms of assembly, homotetramer. Associates with ATP synthase.

The protein resides in the mitochondrion. It is found in the mitochondrion inner membrane. In terms of biological role, involved in regulation of mitochondrial membrane ATP synthase. Necessary for H(+) conduction of ATP synthase. Facilitates energy-driven catalysis of ATP synthesis by blocking a proton leak through an alternative proton exit pathway. The sequence is that of ATP synthase subunit s, mitochondrial from Homo sapiens (Human).